A 306-amino-acid polypeptide reads, in one-letter code: Methionyl-tRNA formyltransferase (306 aa).

109–112 (SILP) contributes to the (6S)-5,6,7,8-tetrahydrofolate binding site.

The protein belongs to the Fmt family.

The enzyme catalyses L-methionyl-tRNA(fMet) + (6R)-10-formyltetrahydrofolate = N-formyl-L-methionyl-tRNA(fMet) + (6S)-5,6,7,8-tetrahydrofolate + H(+). Attaches a formyl group to the free amino group of methionyl-tRNA(fMet). The formyl group appears to play a dual role in the initiator identity of N-formylmethionyl-tRNA by promoting its recognition by IF2 and preventing the misappropriation of this tRNA by the elongation apparatus. The polypeptide is Methionyl-tRNA formyltransferase (Sphingopyxis alaskensis (strain DSM 13593 / LMG 18877 / RB2256) (Sphingomonas alaskensis)).